Consider the following 174-residue polypeptide: Anthrone oxygenase CPUR_05435 (174 aa).

A run of 4 helical transmembrane segments spans residues 13–33 (VALA…AIMI), 56–76 (YGSV…GFAS), 88–108 (CLAA…AMIP), and 140–160 (WVVL…MGFT).

This sequence belongs to the anthrone oxygenase family.

The protein resides in the membrane. The catalysed reaction is emodin anthrone + O2 = emodin + H2O + H(+). Its function is as follows. Anthrone oxygenase; part of the ergochrome gene cluster responsible for the typical purple-black color of the ergot sclerotia. The ergochrome gene cluster produces several ergot pigments including the yellow ergochrome secalonic acid and its derivatives, as well as the red anthraquinones endocrocin and clavorubin. The pathway begins with the synthesis of atrochrysone thioester by the polyketide synthase (PKS) CPUR_05437. The atrochrysone carboxyl ACP thioesterase CPUR_05436 then breaks the thioester bond and releases the atrochrysone carboxylic acid from CPUR_05437. The decarboxylase CPUR_05434 then catalyzes the concerted decarboxylation-elimination required to convert atochrysone carboxylic acid into emodin anthrone, which is further oxidized to emodin by the anthrone oxygenase CPUR_05435. Emodin is further modified to yield monodictyphenone via several steps involving CPUR_05427, CPUR_05428, CPUR_05429 and CPUR_05430. The short chain dehydrogenase/reductase CPUR_05418 then catalyzes the C-5 ketoreduction to give the xanthone skeleton of the monomeric units. Ergochromes formation requires further dimerization steps of different xanthone units, probably catalyzed by the cytochrome P450 monooxygenase CPUR_05419. CPUR_05425, CPUR_05426 and CPUR_05431 are unique to Claviceps, thus it is likely that they are involved in further modification of xanthone units or in their dimerization. The yellow ergochromes and the red anthraquinone pigments endocrocin and clavorubin are products from the same PKS derived precursors and the latter are likely shunt products in the pathway of xanthone biosynthesis. It is proposed that atrochrysone carboxylic acid released from the PKS CPUR_05437 can also be converted to endocrocin anthrone which is further oxidized into endocrocin by CPUR_05435. Endocrocin could be then modified to clavorubin, possibly by CPUR_05423 and CPUR_05431. Clavorubin is the principal anthraquinone metabolite produced by the cluster with a much higher yield compared to endocrocin. The sequence is that of Anthrone oxygenase CPUR_05435 from Claviceps purpurea (strain 20.1) (Ergot fungus).